Here is a 436-residue protein sequence, read N- to C-terminus: Serine--tRNA ligase (436 aa).

239 to 241 (TAE) is a binding site for L-serine. 270–272 (RKE) is a binding site for ATP. An L-serine-binding site is contributed by Glu-293. An ATP-binding site is contributed by 357 to 360 (EISS). Residue Ser-392 coordinates L-serine.

The protein belongs to the class-II aminoacyl-tRNA synthetase family. Type-1 seryl-tRNA synthetase subfamily. As to quaternary structure, homodimer. The tRNA molecule binds across the dimer.

The protein localises to the cytoplasm. The enzyme catalyses tRNA(Ser) + L-serine + ATP = L-seryl-tRNA(Ser) + AMP + diphosphate + H(+). It carries out the reaction tRNA(Sec) + L-serine + ATP = L-seryl-tRNA(Sec) + AMP + diphosphate + H(+). The protein operates within aminoacyl-tRNA biosynthesis; selenocysteinyl-tRNA(Sec) biosynthesis; L-seryl-tRNA(Sec) from L-serine and tRNA(Sec): step 1/1. Catalyzes the attachment of serine to tRNA(Ser). Is also able to aminoacylate tRNA(Sec) with serine, to form the misacylated tRNA L-seryl-tRNA(Sec), which will be further converted into selenocysteinyl-tRNA(Sec). This Leuconostoc citreum (strain KM20) protein is Serine--tRNA ligase.